A 381-amino-acid chain; its full sequence is Prokineticin receptor 2 (381 aa).

Topologically, residues 1–51 (MGPQNRNTSFAPDLNPPQDHVSLNYSYGDYDLPLGEDEDVTKTQTFFAAKI) are extracellular. Residues N7 and N24 are each glycosylated (N-linked (GlcNAc...) asparagine). The chain crosses the membrane as a helical span at residues 52–72 (VIGVALAGIMLVCGIGNFVFI). Topologically, residues 73-86 (AALARYKKLRNLTN) are cytoplasmic. The helical transmembrane segment at 87–107 (LLIANLAISDFLVAIVCCPFE) threads the bilayer. At 108-133 (MDYYVVRQLSWAHGHVLCASVNYLRT) the chain is on the extracellular side. A disulfide bridge connects residues C125 and C205. The chain crosses the membrane as a helical span at residues 134-154 (VSLYVSTNALLAIAIDRYLAI). Over 155–168 (VHPLKPRMNYQTAS) the chain is Cytoplasmic. The helical transmembrane segment at 169-189 (FLIALVWMVSILIAVPSAYFT) threads the bilayer. Over 190–220 (TETILVIVKNQEKIFCGQIWSVDQQLYYKSY) the chain is Extracellular. The chain crosses the membrane as a helical span at residues 221-241 (FLFVFGLEFVGPVVTMTLCYA). Topologically, residues 242-270 (RISQELWFKAVPGFQTEQIRKRLRCRRKT) are cytoplasmic. The helical transmembrane segment at 271-291 (VLLLMGILTAYVLCWAPFYGF) threads the bilayer. Over 292-310 (TIVRDFFPTVVVKEKHYLT) the chain is Extracellular. The chain crosses the membrane as a helical span at residues 311-331 (AFYVVECIAMSNSMINTICFV). The Cytoplasmic portion of the chain corresponds to 332–381 (TVKNNTMKYFKKMLRLHWRPSHYGSKSSADLDLKTSGVPATEEVDCIRLK).

The protein belongs to the G-protein coupled receptor 1 family. As to quaternary structure, homodimer. In terms of tissue distribution, expressed in several regions of the brain, including paraventricular hypothalamic nucleus, dorsal medial hypothalamic nucleus, paratenial thalamic nuclei, paracentral thalamic nucleus, lateral habenular nucleus, lateral septal nucleus, lateral globus pallidus and amygdala. Highest expression seen in paraventricular thalamic nuclei and is also extensively expressed in the suprachiasmatic nucleus.

Its subcellular location is the cell membrane. In terms of biological role, receptor for prokineticin 2. Exclusively coupled to the G(q) subclass of heteromeric G proteins. Activation leads to mobilization of calcium, stimulation of phosphoinositide turnover and activation of p44/p42 mitogen-activated protein kinase. This is Prokineticin receptor 2 (Prokr2) from Mus musculus (Mouse).